Here is a 726-residue protein sequence, read N- to C-terminus: Catalase-peroxidase (726 aa).

Polar residues predominate over residues 1 to 13 (MSMSEETNNSLSS). The interval 1 to 34 (MSMSEETNNSLSSGKCPFHHGGSDQSAGEGTGSR) is disordered. Positions 105-226 (WHGAGTYRSV…LAATEMGLIY (122 aa)) form a cross-link, tryptophyl-tyrosyl-methioninium (Trp-Tyr) (with M-252). Residue His106 is the Proton acceptor of the active site. The segment at residues 226 to 252 (YVNPEGPNASGEPLSAAAAIRATFGNM) is a cross-link (tryptophyl-tyrosyl-methioninium (Tyr-Met) (with W-105)). Position 267 (His267) interacts with heme b.

Belongs to the peroxidase family. Peroxidase/catalase subfamily. In terms of assembly, homodimer or homotetramer. It depends on heme b as a cofactor. In terms of processing, formation of the three residue Trp-Tyr-Met cross-link is important for the catalase, but not the peroxidase activity of the enzyme.

It catalyses the reaction H2O2 + AH2 = A + 2 H2O. The catalysed reaction is 2 H2O2 = O2 + 2 H2O. Bifunctional enzyme with both catalase and broad-spectrum peroxidase activity. This chain is Catalase-peroxidase, found in Enterobacter sp. (strain 638).